The chain runs to 747 residues: ATP-dependent RNA helicase DBP7 (747 aa).

Disordered regions lie at residues 1-102 (MDDD…TYVS) and 111-130 (SKLENEKVEEEKTYLPSNAP). Positions 15 to 24 (SNASSKSSAQ) are enriched in polar residues. Composition is skewed to basic and acidic residues over residues 75 to 96 (SFREEQLAKRPKYFESRGEGGK) and 111 to 123 (SKLENEKVEEEKT). The Q motif motif lies at 135–164 (DDFNGLGLNDNLVHHLTESLRFKNPTQIQK). In terms of domain architecture, Helicase ATP-binding spans 168–363 (PSLLSTSRDL…SIILNNPEQI (196 aa)). 181–188 (AQTGSGKT) is a binding site for ATP. The DEAD box motif lies at 295-298 (DEGD). A Helicase C-terminal domain is found at 401–626 (TLSAVLKEVA…SSEIKKSDPK (226 aa)). A disordered region spans residues 700-729 (KKLGSLATKSSSTRKEYGEKSRKLEDPRKK). Positions 712-728 (TRKEYGEKSRKLEDPRK) are enriched in basic and acidic residues.

It belongs to the DEAD box helicase family. DDX31/DBP7 subfamily.

The protein resides in the nucleus. Its subcellular location is the nucleolus. It carries out the reaction ATP + H2O = ADP + phosphate + H(+). ATP-binding RNA helicase involved in the biogenesis of 60S ribosomal subunits and is required for the normal formation of 25S and 5.8S rRNAs. In Meyerozyma guilliermondii (strain ATCC 6260 / CBS 566 / DSM 6381 / JCM 1539 / NBRC 10279 / NRRL Y-324) (Yeast), this protein is ATP-dependent RNA helicase DBP7 (DBP7).